The sequence spans 331 residues: NADH-quinone oxidoreductase subunit H 2 (331 aa).

Transmembrane regions (helical) follow at residues 6 to 26 (AGFL…LLVA), 79 to 99 (IFML…AVIP), 120 to 140 (VGLL…ALGG), 155 to 175 (GAAQ…PVVM), 193 to 213 (PFIL…MAEI), 242 to 262 (LFFL…AVLF), 271 to 291 (LPPV…MIWV), and 310 to 330 (VLIP…LWMG).

This sequence belongs to the complex I subunit 1 family. NDH-1 is composed of 14 different subunits. Subunits NuoA, H, J, K, L, M, N constitute the membrane sector of the complex.

It is found in the cell inner membrane. It carries out the reaction a quinone + NADH + 5 H(+)(in) = a quinol + NAD(+) + 4 H(+)(out). Functionally, NDH-1 shuttles electrons from NADH, via FMN and iron-sulfur (Fe-S) centers, to quinones in the respiratory chain. The immediate electron acceptor for the enzyme in this species is believed to be ubiquinone. Couples the redox reaction to proton translocation (for every two electrons transferred, four hydrogen ions are translocated across the cytoplasmic membrane), and thus conserves the redox energy in a proton gradient. This subunit may bind ubiquinone. The chain is NADH-quinone oxidoreductase subunit H 2 from Syntrophobacter fumaroxidans (strain DSM 10017 / MPOB).